The chain runs to 482 residues: MRYRPVIGLEIHVQLSTKTKAFCSCPADVFELPPNTAICPVCTGQPGALPVPNEEMIRFAVKTALALNCKIHKYSRFDRKNYFYPDLPKGYQISQYFYPIATEGFLEIDGDEGRKKVRIRRLHLEEDAGKLVHEGDSITRASYSLVDMNRCGVPLIEIVTEPDISSPREARVFMEKLRSIVRYLGVSTGDMEKGALRCDANISVVDTETGRQSNRVEVKNMNSFRFVEKALEYEFERIVKAMERGEDVERETRGWDMTTKTTVSMRGKEEESDYRYFPEPDIPPVVLSDEYLEEVKKELPELPDEKAKRFMREYDLPEYDAKVLTSSKELAEFFEECVKVVNRPKDLSNWIMTEVLRELNERNIEITESKLTPQHFADLFKLMDEGKISIKIAKEIFPEVFETGKMPSQIVEERGLVQINDEKLIEELVKKAMEQNPKAVEDYKAGKKKAAGFFVGFVMRETKGKANPELTNKIVQKLLEGE.

The protein belongs to the GatB/GatE family. GatB subfamily. In terms of assembly, heterotrimer of A, B and C subunits.

The enzyme catalyses L-glutamyl-tRNA(Gln) + L-glutamine + ATP + H2O = L-glutaminyl-tRNA(Gln) + L-glutamate + ADP + phosphate + H(+). It carries out the reaction L-aspartyl-tRNA(Asn) + L-glutamine + ATP + H2O = L-asparaginyl-tRNA(Asn) + L-glutamate + ADP + phosphate + 2 H(+). Allows the formation of correctly charged Asn-tRNA(Asn) or Gln-tRNA(Gln) through the transamidation of misacylated Asp-tRNA(Asn) or Glu-tRNA(Gln) in organisms which lack either or both of asparaginyl-tRNA or glutaminyl-tRNA synthetases. The reaction takes place in the presence of glutamine and ATP through an activated phospho-Asp-tRNA(Asn) or phospho-Glu-tRNA(Gln). The chain is Aspartyl/glutamyl-tRNA(Asn/Gln) amidotransferase subunit B from Thermotoga neapolitana (strain ATCC 49049 / DSM 4359 / NBRC 107923 / NS-E).